The following is a 64-amino-acid chain: Large ribosomal subunit protein bL33c (64 aa).

Belongs to the bacterial ribosomal protein bL33 family.

The protein resides in the plastid. It is found in the chloroplast. In Thalassiosira pseudonana (Marine diatom), this protein is Large ribosomal subunit protein bL33c.